A 432-amino-acid chain; its full sequence is Putative D-alanyl-D-alanine carboxypeptidase (432 aa).

Residues 7–25 (ATVLLTFSLSAFAVEYPVL) traverse the membrane as a helical; Signal-anchor segment.

Belongs to the peptidase S12 family. YfeW subfamily.

It is found in the cell inner membrane. The catalysed reaction is Preferential cleavage: (Ac)2-L-Lys-D-Ala-|-D-Ala. Also transpeptidation of peptidyl-alanyl moieties that are N-acyl substituents of D-alanine.. This chain is Putative D-alanyl-D-alanine carboxypeptidase, found in Salmonella typhi.